A 470-amino-acid polypeptide reads, in one-letter code: Argininosuccinate lyase (470 aa).

This sequence belongs to the lyase 1 family. Argininosuccinate lyase subfamily.

The protein resides in the cytoplasm. It catalyses the reaction 2-(N(omega)-L-arginino)succinate = fumarate + L-arginine. The protein operates within amino-acid biosynthesis; L-arginine biosynthesis; L-arginine from L-ornithine and carbamoyl phosphate: step 3/3. This Prochlorococcus marinus (strain MIT 9303) protein is Argininosuccinate lyase.